The primary structure comprises 496 residues: Solute carrier family 2, facilitated glucose transporter member 11 (496 aa).

At 1 to 11 (MRALRRLIQGR) the chain is on the cytoplasmic side. Residues 12–32 (ILLLTICAAGIGGTFQFGYNL) traverse the membrane as a helical segment. The Extracellular portion of the chain corresponds to 33 to 61 (SIINAPTLHIQEFTNETWQARTGEPLPDH). N-linked (GlcNAc...) asparagine glycosylation occurs at asparagine 47. A helical membrane pass occupies residues 62–82 (LVLLMWSLIVSLYPLGGLFGA). Residues 83 to 97 (LLAGPLAITLGRKKS) lie on the Cytoplasmic side of the membrane. Residues 98 to 118 (LLVNNIFVVSAAILFGFSRKA) traverse the membrane as a helical segment. Over 119-128 (GSFEMIMLGR) the chain is Extracellular. The helical transmembrane segment at 129–149 (LLVGVNAGVSMNIQPMYLGES) threads the bilayer. The Cytoplasmic portion of the chain corresponds to 150 to 157 (APKELRGA). A helical transmembrane segment spans residues 158 to 178 (VAMSSAIFTALGIVMGQVVGL). Over 179–187 (RELLGGPQA) the chain is Extracellular. The helical transmembrane segment at 188 to 208 (WPLLLASCLVPGALQLASLPL) threads the bilayer. Residues 209–273 (LPESPRYLLI…LFQHRALRRQ (65 aa)) are Cytoplasmic-facing. The helical transmembrane segment at 274–294 (VTSLVVLGSAMELCGNDSVYA) threads the bilayer. Topologically, residues 295–311 (YASSVFRKAGVPEAKIQ) are extracellular. A helical membrane pass occupies residues 312–332 (YAIIGTGSCELLTAVVSCVVI). The Cytoplasmic segment spans residues 333–338 (ERVGRR). The chain crosses the membrane as a helical span at residues 339–359 (VLLIGGYSLMTCWGSIFTVAL). At 360–364 (CLQSS) the chain is on the extracellular side. A helical membrane pass occupies residues 365–385 (FPWTLYLAMACIFAFILSFGI). The Cytoplasmic portion of the chain corresponds to 386–408 (GPAGVTGILATELFDQMARPAAC). A helical transmembrane segment spans residues 409 to 429 (MVCGALMWIMLILVGLGFPFI). The Extracellular portion of the chain corresponds to 430-435 (MEALSH). A helical transmembrane segment spans residues 436-456 (FLYVPFLGVCVCGAIYTGLFL). Topologically, residues 457–496 (PETKGKTFQEISKELHRLNFPRRAQGPTWRSLEVIQSTEL) are cytoplasmic.

It belongs to the major facilitator superfamily. Sugar transporter (TC 2.A.1.1) family. Glucose transporter subfamily. Expressed in heart and skeletal muscle.

The protein resides in the cell membrane. The enzyme catalyses D-glucose(out) = D-glucose(in). Functionally, facilitative glucose transporter. The chain is Solute carrier family 2, facilitated glucose transporter member 11 from Homo sapiens (Human).